The chain runs to 127 residues: uncharacterized protein (127 aa).

3 helical membrane-spanning segments follow: residues 20–42 (NMIWLYEVYMLYKTYTSYFFMSS), 54–76 (IYFCYCANFIALFRVIFGTIFVY), and 91–110 (WILIYLKGSINSLLYMASFT).

Its subcellular location is the membrane. It is found in the cytoplasm. This is an uncharacterized protein from Schizosaccharomyces pombe (strain 972 / ATCC 24843) (Fission yeast).